The primary structure comprises 424 residues: Tol-Pal system protein TolB (424 aa).

An N-terminal signal peptide occupies residues 1–24; that stretch reads MNKARAIARWISFLLLIAAGQVCA.

It belongs to the TolB family. As to quaternary structure, the Tol-Pal system is composed of five core proteins: the inner membrane proteins TolA, TolQ and TolR, the periplasmic protein TolB and the outer membrane protein Pal. They form a network linking the inner and outer membranes and the peptidoglycan layer.

It localises to the periplasm. Functionally, part of the Tol-Pal system, which plays a role in outer membrane invagination during cell division and is important for maintaining outer membrane integrity. This chain is Tol-Pal system protein TolB, found in Methylococcus capsulatus (strain ATCC 33009 / NCIMB 11132 / Bath).